Here is a 558-residue protein sequence, read N- to C-terminus: Ribonuclease J (558 aa).

Zn(2+)-binding residues include H81, H83, D85, H86, H148, and D170. Residue 371-375 participates in substrate binding; it reads HVSGH. H397 lines the Zn(2+) pocket.

This sequence belongs to the metallo-beta-lactamase superfamily. RNA-metabolizing metallo-beta-lactamase-like family. Bacterial RNase J subfamily. As to quaternary structure, homodimer, may be a subunit of the RNA degradosome. The cofactor is Zn(2+).

It localises to the cytoplasm. In terms of biological role, an RNase that has 5'-3' exonuclease and possibly endoonuclease activity. Involved in maturation of rRNA and in some organisms also mRNA maturation and/or decay. The protein is Ribonuclease J of Mycobacterium tuberculosis (strain CDC 1551 / Oshkosh).